The sequence spans 566 residues: FAD-dependent monooxygenase asqG (566 aa).

The signal sequence occupies residues 1 to 19 (MAAFTVIIIGGSISGLTLA). Glu33, Val47, Arg113, Asp313, and Ala326 together coordinate FAD. Transmembrane regions (helical) follow at residues 448-468 (ASSTVLWIILMLGMASLGAVW) and 482-502 (GYTLLTLSTFYNLMILFASAV).

This sequence belongs to the paxM FAD-dependent monooxygenase family. The cofactor is FAD.

Its subcellular location is the membrane. It carries out the reaction [(1'E)-3'-hydroxy-3',7'-dimethylocta-1',6'-dien-1'-yl]-quinolinone B + NADPH + O2 + H(+) = [(1'E)-5'-(3',3'-dimethyloxiran-2'-yl)-3'-hydroxy-3'-methylpent-1'-en-1'-yl]-quinolinone B + NADP(+) + H2O. Its pathway is secondary metabolite biosynthesis. The protein operates within alkaloid biosynthesis. It participates in mycotoxin biosynthesis. Its function is as follows. FAD-dependent monooxygenase; part of the gene cluster that mediates the biosynthesis of the aspoquinolone mycotoxins. Within the pathway, the FAD-dependent monooxygenase asqG catalyzes the epoxidation of the terminal C7'-C8' olefin to produce the intermediate [(1'E)-5'-(3',3'-dimethyloxiran-2'-yl)-3'-hydroxy-3'-methylpent-1'-en-1'-yl]-quinolinone B. The first step of the pathway is catalyzed by the nonribosomal peptide synthetase asqK that condenses anthranilic acid and O-methyl-L-tyrosine to produce 4'-methoxycyclopeptin. 4'-methoxycyclopeptin is then converted to 4'-methoxydehydrocyclopeptin by the ketoglutarate-dependent dioxygenase asqJ. AsqJ also converts its first product 4'-methoxydehydrocyclopeptin to 4'-methoxycyclopenin. The following conversion of 4'-methoxycyclopenin into 4'-methoxyviridicatin is catalyzed by the cyclopenase asqI. 4'-methoxyviridicatin is the precursor of quinolone natural products, and is further converted to quinolinone B. The prenyltransferase asqH1 then catalyzes the canonical Friedel-Crafts alkylation of quinolinone B with dimethylallyl cation to yield dimethylallyl quinolone, which is subjected to FAD-dependent dehydrogenation by the FAD-linked oxidoreductase asqF to yield conjugated aryl diene. The delta(3') double bond then serves as the site of the second alkylation with DMAPP catalyzed by the prenyltransferase asqH2 to yield a carbenium ion intermediate, which can be attacked by H(2)O to yield a styrenyl quinolone containing a C3'-hydroxyprenyl chain. The FAD-dependent monooxygenase asqG performs epoxidation of the terminal C7'-C8' olefin. Finally, after dehydratation of the epoxide at C3 by asqC, the quinolone epoxide rearrangement protein asqO catalyzes an enzymatic 3-exo-tet cyclization to yield the cyclopropyl-THF ring system in aspoquinolone. This is FAD-dependent monooxygenase asqG from Emericella nidulans (strain FGSC A4 / ATCC 38163 / CBS 112.46 / NRRL 194 / M139) (Aspergillus nidulans).